A 239-amino-acid polypeptide reads, in one-letter code: Sugar fermentation stimulation protein homolog (239 aa).

This sequence belongs to the SfsA family.

The chain is Sugar fermentation stimulation protein homolog from Agrobacterium fabrum (strain C58 / ATCC 33970) (Agrobacterium tumefaciens (strain C58)).